Reading from the N-terminus, the 488-residue chain is Germacrene A hydroxylase (488 aa).

Residues 1 to 6 lie on the Cytoplasmic side of the membrane; it reads MELSIT. The chain crosses the membrane as a helical; Signal-anchor for type II membrane protein span at residues 7–23; it reads TSIALATIVFFLYKLAT. The Lumenal segment spans residues 24-488; sequence RPKSTKKQLP…KTELLLVPSF (465 aa). Residues N169, N260, and N379 are each glycosylated (N-linked (GlcNAc...) asparagine). C432 lines the heme pocket.

Belongs to the cytochrome P450 family. It depends on heme as a cofactor.

Its subcellular location is the endoplasmic reticulum membrane. The catalysed reaction is (+)-(R)-germacrene A + 3 reduced [NADPH--hemoprotein reductase] + 3 O2 = germacra-1(10),4,11(13)-trien-12-oate + 3 oxidized [NADPH--hemoprotein reductase] + 4 H2O + 4 H(+). It participates in secondary metabolite biosynthesis; terpenoid biosynthesis. Its function is as follows. Involved in the biosynthesis of germacrene-derived sesquiterpene lactones. Catalyzes three consecutive oxidations of germacrene A to produce germacrene A acid. Could also catalyze the three-step oxidation of non-natural substrate amorphadiene to artemisinic acid. This is Germacrene A hydroxylase from Lactuca sativa (Garden lettuce).